We begin with the raw amino-acid sequence, 489 residues long: Rhamnulokinase (489 aa).

13–17 (ASSGR) lines the ATP pocket. An intrachain disulfide couples C68 to C222. Substrate contacts are provided by residues G83 and 236–238 (HDT). D237 functions as the Proton acceptor in the catalytic mechanism. T259 is an ATP binding site. Position 296 (N296) interacts with substrate. Q304 lines the ATP pocket. A disulfide bridge links C353 with C370. G402 provides a ligand contact to ATP. The cysteines at positions 413 and 417 are disulfide-linked.

This sequence belongs to the rhamnulokinase family. In terms of assembly, monomer. Mg(2+) is required as a cofactor.

The enzyme catalyses L-rhamnulose + ATP = L-rhamnulose 1-phosphate + ADP + H(+). Its pathway is carbohydrate degradation; L-rhamnose degradation; glycerone phosphate from L-rhamnose: step 2/3. Functionally, involved in the catabolism of L-rhamnose (6-deoxy-L-mannose). Catalyzes the transfer of the gamma-phosphate group from ATP to the 1-hydroxyl group of L-rhamnulose to yield L-rhamnulose 1-phosphate. In Escherichia coli O17:K52:H18 (strain UMN026 / ExPEC), this protein is Rhamnulokinase.